A 137-amino-acid polypeptide reads, in one-letter code: DPKDRKKIQFSXPAPPSQLDPRQLEMIRRRRPTPAMLFRLXEHSSPEEEASPHQRAAGEGHHLKSKRPNPCAYTPPSLKAVQRIAESHLQSISNLGENQASEEEDELGELRELGYPREEEEEEEEDDEEEEEEEDSQ.

Positions 1–137 (DPKDRKKIQF…EEEEEEEDSQ (137 aa)) are disordered. The residue at position 33 (threonine 33) is a Phosphothreonine; by PKA. Residues 40–62 (LXEHSSPEEEASPHQRAAGEGHH) show a composition bias toward basic and acidic residues. Phosphoserine occurs at positions 44 and 45. Phosphothreonine; by CDK5 is present on threonine 74. Positions 88–99 (HLQSISNLGENQ) are enriched in polar residues. Serine 101 carries the phosphoserine modification. Basic and acidic residues predominate over residues 108-117 (GELRELGYPR). The span at 118–137 (EEEEEEEEDDEEEEEEEDSQ) shows a compositional bias: acidic residues. Residue serine 136 is modified to Phosphoserine.

It belongs to the protein phosphatase inhibitor 1 family. Phosphorylation of Thr-33 is required for activity. In terms of processing, dopamine- and cyclic AMP-regulated neuronal phosphoprotein.

It is found in the cytoplasm. Inhibitor of protein-phosphatase 1. This chain is Protein phosphatase 1 regulatory subunit 1B (PPP1R1B), found in Sus scrofa (Pig).